The primary structure comprises 607 residues: Rap1 GTPase-GDP dissociation stimulator 1 (607 aa).

2 ARM repeats span residues 89-131 and 170-211; these read GLIS…DQAG and DSLQ…NLAE. A prevents binding to prenylated RHOA region spans residues 122 to 170; that stretch reads EGRSAVDQAGGAQIVIDHLRSLCGRTDPASEKLMTVFCGMLMNYSNEND. Residue Lys-230 is modified to N6-acetyllysine. ARM repeat units follow at residues 347–390, 391–431, and 479–519; these read DGNC…NLAI, PVVN…MLID, and SKDV…LIAA.

Interacts with RABL3. Interacts with RHOT1. As to quaternary structure, interacts with unprenylated RHOA; the interaction is direct. Interacts with RAP1A. Interacts with KRAS. Interacts with RAC1. Interacts with RAP1B. Preferentially interacts with unprenylated GTPases that will become geranylgeranylated. May also interact with prenylated GTPases. In terms of assembly, interacts with prenylated RHOA; the interaction is direct and in a 1:1 stoichiometry. Interacts with RAP1A. Interacts with KRAS. Interacts with RAC1. Interacts with RAP1B. Preferentially interacts with prenylated GTPases. In terms of processing, serotonylated on Gln residues by TGM2 in response to hypoxia, leading to its inactivation.

The protein resides in the cytoplasm. The protein localises to the cytosol. It localises to the endoplasmic reticulum. Its subcellular location is the mitochondrion. It is found in the nucleus. Acts as a GEF (guanine nucleotide exchange factor) for the Rho family of small GTP-binding proteins (G proteins) that stimulates the dissociation of GDP to enable subsequent binding of GTP. Additionally, appears to chaperone the processing and/or trafficking of small GTPases containing a C-terminal polybasic region independently of GEF activity. Targets include RAP1A/RAP1B, RHOA, RHOB, RHOC, RAC1 and KRAS. Regulates mitochondrial dynamics by controlling RHOT function to promote mitochondrial fission during high calcium conditions. Able to promote the Ca(2+) release from the endoplasmic reticulum via both inositol trisphosphate (Ins3P) and ryanodine sensitive receptors leading to a enhanced mitochondrial Ca(2+) uptake. In terms of biological role, acts as a GEF (guanine nucleotide exchange factor) for unprenylated RHOA. Chaperones the entry and passage of small GTPases through the prenylation pathway. Recognizes the last amino acid in the GTPase C-terminal CAAX motif with a preference for 'Leu' over 'Met', indicating involvement in the geranylgeranylation pathway. May also recognize prenylated GTPases. Functionally, acts as a GEF (guanine nucleotide exchange factor) for prenylated RHOA. Acts as a GEF for RHOC. Chaperones the downstream trafficking and/or processing of small newly prenylated GTPases. Escorts RAC1 to the nucleus. The protein is Rap1 GTPase-GDP dissociation stimulator 1 of Mus musculus (Mouse).